Consider the following 1043-residue polypeptide: Isoleucine--tRNA ligase (1043 aa).

P46 and H57 together coordinate L-isoleucyl-5'-AMP. Positions 47-57 (PTANGLPHVGH) match the 'HIGH' region motif. Positions 181 and 184 each coordinate Zn(2+). Residues H319 and D328 each coordinate L-valine. 6 residues coordinate Zn(2+): C389, C392, C461, C464, C502, and C504. Residues E550, G551, D553, Q554, and H581 each coordinate L-isoleucyl-5'-AMP. Residues 591–595 (KMSKS) carry the 'KMSKS' region motif. K594 serves as a coordination point for ATP.

The protein belongs to the class-I aminoacyl-tRNA synthetase family. IleS type 2 subfamily. In terms of assembly, monomer. Zn(2+) serves as cofactor.

Its subcellular location is the cytoplasm. It carries out the reaction tRNA(Ile) + L-isoleucine + ATP = L-isoleucyl-tRNA(Ile) + AMP + diphosphate. Functionally, catalyzes the attachment of isoleucine to tRNA(Ile). As IleRS can inadvertently accommodate and process structurally similar amino acids such as valine, to avoid such errors it has two additional distinct tRNA(Ile)-dependent editing activities. One activity is designated as 'pretransfer' editing and involves the hydrolysis of activated Val-AMP. The other activity is designated 'posttransfer' editing and involves deacylation of mischarged Val-tRNA(Ile). This is Isoleucine--tRNA ligase (ileS) from Thermus thermophilus (strain ATCC 27634 / DSM 579 / HB8).